The following is a 294-amino-acid chain: MNYYVGIDGGGTSCRARIRNQQGEWVGEAKSGSANIMLGVEVALRSVVDAITQAAEQGGLSPDDFPSMHVGLALAGAEQKEAWHAFMQQAHPFASITLNTDAYGACLGAHLGEEGAIMIAGTGSCGILLKGGKQYVVGGREFPISDQGSGAVMGLRLIQQVLLAQDGIRPHTPLCDVVMNHFNHDIDSIVAWSKTALPRDYGQFSPQIFSHAYCGDPLAIELLKQTAADIEMFLIALHHKGAERICLMGSIAERIQDWLSPPVQQWIVKPQSDAIEGALMFAGKPEHNLYKDGL.

Residue threonine 12 participates in ATP binding. Aspartate 101 contributes to the substrate binding site. Threonine 122 contributes to the ATP binding site. Substrate is bound by residues 139-141 and aspartate 146; that span reads GRE. Glycine 202 lines the ATP pocket.

The protein belongs to the eukaryotic-type N-acetylglucosamine kinase family.

It localises to the cytoplasm. It carries out the reaction D-glucosamine + ATP = D-glucosamine 6-phosphate + ADP + H(+). In terms of biological role, ATP-dependent kinase, which is specific for glucosamine. Does not show kinase activity with any other sugar. This is Glucosamine kinase GspK (gspK) from Vibrio cholerae serotype O1 (strain ATCC 39315 / El Tor Inaba N16961).